The primary structure comprises 489 residues: NADH-quinone oxidoreductase subunit N (489 aa).

A run of 14 helical transmembrane segments spans residues 15-35, 44-64, 78-98, 106-126, 131-151, 166-186, 209-229, 244-264, 278-298, 306-326, 333-353, 378-398, 412-432, and 459-479; these read APLLVVVTWATVLLLVDVFFI, GYLAIGGLVVAGLVGLPLWGV, FALTLTWIFLLIGILSITMSL, IEQGEYYPLIMFAVSGMILLA, LIVLFLGIETLSITLYILTGF, LVLGAFAAGFFVYGIALIFGA, LTLLLGGAAMVLIAFSFKVAL, PTPVAAFMSVGTKGGALAALV, WLPVLAGLTALTMVVGNLGAV, MLAYSSIGHAGYVMLGVMVAG, AFLFYMLVYALSNLGAFAVLI, LAVAMAIFMFSLAGVPPMAGF, GLPWLALVGVVTSAIAAFFYL, and IALAAIGTIAIGLIPAPVFAL.

It belongs to the complex I subunit 2 family. As to quaternary structure, NDH-1 is composed of 14 different subunits. Subunits NuoA, H, J, K, L, M, N constitute the membrane sector of the complex.

It localises to the cell membrane. It carries out the reaction a quinone + NADH + 5 H(+)(in) = a quinol + NAD(+) + 4 H(+)(out). Its function is as follows. NDH-1 shuttles electrons from NADH, via FMN and iron-sulfur (Fe-S) centers, to quinones in the respiratory chain. The immediate electron acceptor for the enzyme in this species is believed to be ubiquinone. Couples the redox reaction to proton translocation (for every two electrons transferred, four hydrogen ions are translocated across the cytoplasmic membrane), and thus conserves the redox energy in a proton gradient. The sequence is that of NADH-quinone oxidoreductase subunit N from Chloroflexus aggregans (strain MD-66 / DSM 9485).